The chain runs to 397 residues: Phosphoglycerate kinase (397 aa).

Substrate-binding positions include 25–27, Arg41, 64–67, Arg118, and Arg151; these read DLN and HLGR. Residues Lys202, Glu324, and 350-353 each bind ATP; that span reads GGDT.

Belongs to the phosphoglycerate kinase family. As to quaternary structure, monomer.

Its subcellular location is the cytoplasm. It catalyses the reaction (2R)-3-phosphoglycerate + ATP = (2R)-3-phospho-glyceroyl phosphate + ADP. The protein operates within carbohydrate degradation; glycolysis; pyruvate from D-glyceraldehyde 3-phosphate: step 2/5. The chain is Phosphoglycerate kinase from Leptothrix cholodnii (strain ATCC 51168 / LMG 8142 / SP-6) (Leptothrix discophora (strain SP-6)).